Consider the following 85-residue polypeptide: Putative regulatory protein THEYE_A0405 (85 aa).

This sequence belongs to the RemA family.

The chain is Putative regulatory protein THEYE_A0405 from Thermodesulfovibrio yellowstonii (strain ATCC 51303 / DSM 11347 / YP87).